A 164-amino-acid chain; its full sequence is Protein-export protein SecB (164 aa).

The protein belongs to the SecB family. In terms of assembly, homotetramer, a dimer of dimers. One homotetramer interacts with 1 SecA dimer.

It localises to the cytoplasm. In terms of biological role, one of the proteins required for the normal export of preproteins out of the cell cytoplasm. It is a molecular chaperone that binds to a subset of precursor proteins, maintaining them in a translocation-competent state. It also specifically binds to its receptor SecA. The chain is Protein-export protein SecB from Rhodopseudomonas palustris (strain BisB18).